Here is a 968-residue protein sequence, read N- to C-terminus: MPGILDRVLRIGEGKILRKLNKLKDQINSIEDDFVDLSDAELRALTDEYKQRLKDGEELDDLLPEAFATVREAAKRTLGQRHFDVQLMGGAALHFGNIAEMKTGEGKTLTATLPVYLNALTGKGVHVVTVNDYLARRDAETMGRIYRFLGMEVGVISPEMSPAARRKAYQADITYGTNNEFGFDYLRDNMARSLDNCVQRGHHYAIVDEVDSILIDEARTPLIISGPAEQNSRWYVEFAKIAPRLRRDVDYEVDEKKRTVGITEAGVAKVEDWLGIDNLYESVNTPLISFLHNAIKAKELYRRDRDYIVKDGEVLIVDEFTGRILRGRRYNEGMHQAIEAKEKVKIKEENQTLAKITLQNYFRLYEKLAGMTGTAVTEAAEFQQTYNLGVVPIPTNKPMIREDLRDLVYKTEEAKFQAIVEDIAECHERGQPVLVGTTSVEKSELLSKMLKRRGIPHEVLNAKNHAREAAIVARAGKLGAVTVATNMAGRGTDIMLGGNPDFIAAEELQERGLSPLETPEEYEKAWPEALERAKKEVEAEHQKVVELGGLYVLGTERHESRRIDNQLRGRAGRQGDPGKSRFYLSLGDDLMRLFNGERVQMIMNRLNLPDDQPIEHKMVTKAIQSAQGQLEQQNFEIRKNVLKYDEVLNRQRQVIYAERRKVLEGADLREQVRSMIDDVLDSYVRSATAEGDPEDWDLEHLWTAFSQIFPVSFTADQLIEENGGDISVLTPDIISQRVREDAHEVYDRREAEIGEETMREVERQVILQVMDRKWREHLYEMDYLQEGIGLRAMAQRNPLIEYQREGYDMFQEMLEGIKEESIRFLFNVEVRVNQPQESQITAASAAATASAIPLVAPEAEKTEDKAEDAQEAEESAASAEAAESAKDTAQDKDAESVAKKAQAVVPALGKEEKQPEKLQYSGPSEGGGVEKRTEDTGPDYANTPRNAPCPCGSGKKYKKCHGAPKSRV.

ATP contacts are provided by residues Gln86, 104-108 (GEGKT), and Asp493. Composition is skewed to basic and acidic residues over residues 858 to 868 (EAEKTEDKAED) and 883 to 898 (ESAK…ESVA). Positions 858-968 (EAEKTEDKAE…KCHGAPKSRV (111 aa)) are disordered. Zn(2+)-binding residues include Cys949, Cys951, Cys960, and His961. Basic residues predominate over residues 955–968 (KKYKKCHGAPKSRV).

This sequence belongs to the SecA family. In terms of assembly, monomer and homodimer. Part of the essential Sec protein translocation apparatus which comprises SecA, SecYEG and auxiliary proteins SecDF. Other proteins may also be involved. The cofactor is Zn(2+).

It localises to the cell membrane. It is found in the cytoplasm. It catalyses the reaction ATP + H2O + cellular proteinSide 1 = ADP + phosphate + cellular proteinSide 2.. Part of the Sec protein translocase complex. Interacts with the SecYEG preprotein conducting channel. Has a central role in coupling the hydrolysis of ATP to the transfer of proteins into and across the cell membrane, serving as an ATP-driven molecular motor driving the stepwise translocation of polypeptide chains across the membrane. The protein is Protein translocase subunit SecA 1 of Thermobifida fusca (strain YX).